A 323-amino-acid chain; its full sequence is Sphingolipid delta(4)-desaturase/C4-monooxygenase DES2 (323 aa).

Gly-2 carries the N-myristoyl glycine lipid modification. A run of 2 helical transmembrane segments spans residues 41–61 and 68–88; these read PHIK…CWLV and WLLF…TLAI. The Histidine box-1 motif lies at 89-93; sequence HDISH. A required for C4-hydroxylase activity region spans residues 95–99; that stretch reads TAFGT. Positions 128–132 match the Histidine box-2 motif; sequence HVDHH. The helical transmembrane segment at 210–231 threads the bilayer; that stretch reads VYLLGSSLLGLGLHPISGHFVA. The Histidine box-3 motif lies at 259-263; the sequence is HMEHH.

It belongs to the fatty acid desaturase type 1 family. DEGS subfamily. As to expression, highly expressed in intestinal crypt cells and adjacent epithelial cells (at protein level).

The protein localises to the endoplasmic reticulum membrane. It catalyses the reaction a dihydroceramide + 2 Fe(II)-[cytochrome b5] + O2 + 2 H(+) = a phytoceramide + 2 Fe(III)-[cytochrome b5] + H2O. The enzyme catalyses an N-acylsphinganine + 2 Fe(II)-[cytochrome b5] + O2 + 2 H(+) = an N-acylsphing-4-enine + 2 Fe(III)-[cytochrome b5] + 2 H2O. It carries out the reaction an N-acylsphinganine + 2 Fe(II)-[cytochrome b5] + O2 + 2 H(+) = an N-acyl-(4R)-4-hydroxysphinganine + 2 Fe(III)-[cytochrome b5] + H2O. The catalysed reaction is N-octanoylsphinganine + 2 Fe(II)-[cytochrome b5] + O2 + 2 H(+) = N-octanoyl-4-hydroxysphinganine + 2 Fe(III)-[cytochrome b5] + H2O. The protein operates within membrane lipid metabolism; sphingolipid biosynthesis. Bifunctional enzyme which acts both as a sphingolipid delta(4)-desaturase and a sphingolipid C4-monooxygenase. The sequence is that of Sphingolipid delta(4)-desaturase/C4-monooxygenase DES2 from Mus musculus (Mouse).